The chain runs to 104 residues: Ribonuclease P protein component 4 (104 aa).

Zn(2+) contacts are provided by C57, C60, C83, and C86.

Belongs to the eukaryotic/archaeal RNase P protein component 4 family. Consists of a catalytic RNA component and at least 4-5 protein subunits. It depends on Zn(2+) as a cofactor.

It localises to the cytoplasm. The catalysed reaction is Endonucleolytic cleavage of RNA, removing 5'-extranucleotides from tRNA precursor.. Its function is as follows. Part of ribonuclease P, a protein complex that generates mature tRNA molecules by cleaving their 5'-ends. The polypeptide is Ribonuclease P protein component 4 (Saccharolobus islandicus (strain M.16.27) (Sulfolobus islandicus)).